The sequence spans 582 residues: ATP-dependent lipid A-core flippase (582 aa).

A run of 5 helical transmembrane segments spans residues Leu16–Leu36, Val63–Tyr83, Ile153–Val173, Pro253–Pro273, and Val275–Met295. The region spanning Ile28–Arg310 is the ABC transmembrane type-1 domain. Residues Val342–Met578 form the ABC transporter domain. Gly376 to Ser383 contacts ATP.

It belongs to the ABC transporter superfamily. Lipid exporter (TC 3.A.1.106) family. In terms of assembly, homodimer.

It is found in the cell inner membrane. The enzyme catalyses ATP + H2O + lipid A-core oligosaccharideSide 1 = ADP + phosphate + lipid A-core oligosaccharideSide 2.. Its function is as follows. Involved in lipopolysaccharide (LPS) biosynthesis. Translocates lipid A-core from the inner to the outer leaflet of the inner membrane. Transmembrane domains (TMD) form a pore in the inner membrane and the ATP-binding domain (NBD) is responsible for energy generation. This chain is ATP-dependent lipid A-core flippase, found in Escherichia coli O157:H7.